Consider the following 465-residue polypeptide: Deoxyguanosinetriphosphate triphosphohydrolase-like protein (465 aa).

A disordered region spans residues 1-22 (MKWDKLLNDKRRRESGVTRSKN). The HD domain occupies 63 to 252 (RLTHSMEVST…LEVADDIAYL (190 aa)).

It belongs to the dGTPase family. Type 3 subfamily.

This Listeria monocytogenes serovar 1/2a (strain ATCC BAA-679 / EGD-e) protein is Deoxyguanosinetriphosphate triphosphohydrolase-like protein.